Here is a 130-residue protein sequence, read N- to C-terminus: Small ribosomal subunit protein uS8 (130 aa).

The protein belongs to the universal ribosomal protein uS8 family. In terms of assembly, part of the 30S ribosomal subunit.

Its function is as follows. One of the primary rRNA binding proteins, it binds directly to 16S rRNA central domain where it helps coordinate assembly of the platform of the 30S subunit. This chain is Small ribosomal subunit protein uS8, found in Halobacterium salinarum (strain ATCC 29341 / DSM 671 / R1).